Consider the following 171-residue polypeptide: uncharacterized protein (171 aa).

A PfpI endopeptidase domain is found at 3 to 171 (KKVAIILANE…FNREIVKQLQ (169 aa)).

It belongs to the peptidase C56 family.

This is an uncharacterized protein from Staphylococcus aureus (strain MRSA252).